The primary structure comprises 364 residues: NADH-quinone oxidoreductase subunit H (364 aa).

The next 8 helical transmembrane spans lie at 21-41, 88-108, 120-140, 159-179, 208-228, 267-287, 301-321, and 340-360; these read AGQILAVMIWILLSLAFLLLA, VFLLAPLISFTLAFAAWAVIP, VGILYLFAISSLGVYGIIMGG, MVSYEVSIGFIIITVILLAGS, LPLLLVMVPMAVIFFISGLAE, IVLICAMTTILFFGGWSAPFP, FYYFMWFFLKVIFFFFLVSMA, and VFLPFSLVCVALIAAWRVFGP.

This sequence belongs to the complex I subunit 1 family. In terms of assembly, NDH-1 is composed of 14 different subunits. Subunits NuoA, H, J, K, L, M, N constitute the membrane sector of the complex.

It localises to the cell inner membrane. The catalysed reaction is a quinone + NADH + 5 H(+)(in) = a quinol + NAD(+) + 4 H(+)(out). Its function is as follows. NDH-1 shuttles electrons from NADH, via FMN and iron-sulfur (Fe-S) centers, to quinones in the respiratory chain. The immediate electron acceptor for the enzyme in this species is believed to be ubiquinone. Couples the redox reaction to proton translocation (for every two electrons transferred, four hydrogen ions are translocated across the cytoplasmic membrane), and thus conserves the redox energy in a proton gradient. This subunit may bind ubiquinone. This chain is NADH-quinone oxidoreductase subunit H, found in Phenylobacterium zucineum (strain HLK1).